Consider the following 391-residue polypeptide: Phosphoglycerate kinase (391 aa).

Substrate-binding positions include 21–23, R36, 59–62, R113, and R146; these read DLN and HLGR. Residues K197, E319, and 345–348 contribute to the ATP site; that span reads GGDT.

Belongs to the phosphoglycerate kinase family. In terms of assembly, monomer.

It is found in the cytoplasm. The enzyme catalyses (2R)-3-phosphoglycerate + ATP = (2R)-3-phospho-glyceroyl phosphate + ADP. Its pathway is carbohydrate degradation; glycolysis; pyruvate from D-glyceraldehyde 3-phosphate: step 2/5. The chain is Phosphoglycerate kinase from Colwellia psychrerythraea (strain 34H / ATCC BAA-681) (Vibrio psychroerythus).